We begin with the raw amino-acid sequence, 263 residues long: Protein PYRICULARIA ORYZAE RESISTANCE 21 (263 aa).

The HMA domain maps to 1-68 (MGILVISVDL…IWCKAGKIIK (68 aa)). A metal cation is bound by residues Cys12 and Cys15. Residues 126–153 (CEKPKPCEKPPPCKPEEPPKPPPEKPPP) form a disordered region. A compositionally biased stretch (basic and acidic residues) spans 139 to 153 (KPEEPPKPPPEKPPP).

Functionally, involved in defense responses. Contributes to slowing defense responses toward Magnaporthe oryzae. The chain is Protein PYRICULARIA ORYZAE RESISTANCE 21 from Oryza sativa subsp. indica (Rice).